A 61-amino-acid chain; its full sequence is Peroxidase 1 (61 aa).

The disordered stretch occupies residues 1 to 32 (DNTAKEKDSPANLSLRTCAAGDNAEQPLDPSR). N-linked (GlcNAc...) asparagine glycosylation occurs at asparagine 12. Ca(2+) contacts are provided by aspartate 29, serine 31, and aspartate 36.

This sequence belongs to the peroxidase family. Classical plant (class III) peroxidase subfamily. It depends on Ca(2+) as a cofactor. Heme b is required as a cofactor.

The protein localises to the secreted. It carries out the reaction 2 a phenolic donor + H2O2 = 2 a phenolic radical donor + 2 H2O. In terms of biological role, removal of H(2)O(2), oxidation of toxic reductants, biosynthesis and degradation of lignin, suberization, auxin catabolism, response to environmental stresses such as wounding, pathogen attack and oxidative stress. These functions might be dependent on each isozyme/isoform in each plant tissue. The chain is Peroxidase 1 from Vitis rotundifolia (Muscadine grape).